The primary structure comprises 362 residues: Abnormal cell migration protein 13 (362 aa).

The first 20 residues, 1–20 (MTKLLIALILFSICWKPYSA), serve as a signal peptide directing secretion. The Extracellular portion of the chain corresponds to 21–237 (EPIASFFDGL…ELDPLTTVSG (217 aa)). Cystine bridges form between Cys-36/Cys-68 and Cys-98/Cys-136. Positions 36–175 (CKARLDRRLT…KGFKLHWGSF (140 aa)) constitute a CUB domain. The N-linked (GlcNAc...) asparagine glycan is linked to Asn-63. N-linked (GlcNAc...) asparagine glycans are attached at residues Asn-145 and Asn-161. The LDL-receptor class A domain occupies 182-225 (NCVTGEFSCGNGECIPIESACDRFADCSNGEDLIHSRQMAANCQ). 3 disulfide bridges follow: Cys-183/Cys-195, Cys-190/Cys-208, and Cys-202/Cys-224. A helical membrane pass occupies residues 238 to 258 (VFVLLFSATIILSLCGFIMFV). Topologically, residues 259–362 (CCLCKCLKST…VRNDVHRNLL (104 aa)) are cytoplasmic. A disordered region spans residues 275 to 311 (SSHTTTTTATDYKPDPPQFYPPSPPKMPPPSAASSYT). A compositionally biased stretch (pro residues) spans 289–305 (DPPQFYPPSPPKMPPPS).

Interacts with abl-1 (via SH2 and SH3 domains); the interaction is direct. Interacts with sem-5; the interaction is direct. Expressed in pharyngeal-intestinal valve cells and ventral cord neurons.

It localises to the cell membrane. It is found in the perikaryon. Its subcellular location is the cell projection. The protein localises to the axon. The protein resides in the dendrite. Its function is as follows. Probable receptor that acts as an upstream signaling protein to promote the guidance, migration and positioning of the right Q neuroblast (QR) and its descendants along the anteroposterior body axis, and also the anterior migration of BDU interneurons during larval development. Associates with and recruits the downstream components tyrosine kinase abl-1 and the tyrosine kinase adapter protein sem-5 to the leading edge of migrating Q neuroblasts and their descendants to activate signaling through the two parallel wve-1 and wsp-1 pathways, respectively, and direct migration along the anteroposterior body axis. Involved in cytoskeleton dynamics regulating the organization of the actin cytoskeleton at the leading edge of migrating cells to ensure correct Q cell polarity and promote migration. Role in cytoskeleton organization may be by activation of the wve-1 and wsp-1 pathways which recruit the Arp2/3 complex to the leading edge of migrating cells. Plays a role in regulating the asymmetric distribution of the actin cytoskeleton-binding protein cor-1 in Q neuroblasts which is required for the anterior migration of QR neuroblasts. The chain is Abnormal cell migration protein 13 from Caenorhabditis elegans.